The following is a 622-amino-acid chain: Kelch-like protein 14 (622 aa).

In terms of domain architecture, BTB spans 33–145 (CDVTLTAQGQ…LYTANVTLSL (113 aa)). Residues 73–108 (ALGPGAQDGLGGAPPKEPPPPPQEEPGTPSSSPEDK) form a disordered region. Residues 87-96 (PKEPPPPPQE) show a composition bias toward pro residues. Kelch repeat units lie at residues 317-366 (MLLL…EVEN), 367-418 (FLFV…RLDK), 419-465 (NLYV…VHNG), 467-512 (IYIS…VMND), 514-564 (LYAI…VLDD), and 566-614 (IYLV…TVIL).

The protein resides in the cytoplasm. Its subcellular location is the cytosol. It is found in the endoplasmic reticulum membrane. The protein is Kelch-like protein 14 (KLHL14) of Gallus gallus (Chicken).